A 700-amino-acid polypeptide reads, in one-letter code: Leucine zipper putative tumor suppressor 3 (700 aa).

Disordered regions lie at residues 1-20 (MAPA…PAPH), 40-121 (RADP…SEDK), 133-188 (LRGS…SEPL), and 202-344 (FHSM…PPSP). Over residues 109-121 (NRERPGRYPSEDK) the composition is skewed to basic and acidic residues. Residues 203–216 (HSMQNLCPPQTNGT) are compositionally biased toward polar residues. 2 stretches are compositionally biased toward low complexity: residues 248-265 (DSGR…SSYS) and 301-321 (GTSD…MGRS). Residues 322-333 (GHLGSGEGGNGG) show a composition bias toward gly residues. S343 and S345 each carry phosphoserine. 2 coiled-coil regions span residues 345–523 (SALI…SLRD) and 597–666 (TRAL…RLRE). Residues 662 to 700 (RRLRERGAAGGSSTPTPQHGEEKKAWTPSRLERIESTEI) form a disordered region. The segment covering 680–700 (HGEEKKAWTPSRLERIESTEI) has biased composition (basic and acidic residues).

The protein belongs to the LZTS3 family. In terms of assembly, interacts (via C-terminus) with SHANK3 (via PDZ domain). Interacts (via coiled coil) with SIPA1L1. Can form homooligomers.

It localises to the synapse. It is found in the postsynaptic density. The protein localises to the cell projection. Its subcellular location is the dendritic spine. The protein resides in the dendrite. It localises to the cytoplasm. It is found in the cytoskeleton. Its function is as follows. May be involved in promoting the maturation of dendritic spines, probably via regulating SIPA1L1 levels at the postsynaptic density of synapses. The sequence is that of Leucine zipper putative tumor suppressor 3 from Mus musculus (Mouse).